Consider the following 209-residue polypeptide: Peptide methionine sulfoxide reductase MsrA (209 aa).

Cys51 is an active-site residue.

The protein belongs to the MsrA Met sulfoxide reductase family.

The enzyme catalyses L-methionyl-[protein] + [thioredoxin]-disulfide + H2O = L-methionyl-(S)-S-oxide-[protein] + [thioredoxin]-dithiol. The catalysed reaction is [thioredoxin]-disulfide + L-methionine + H2O = L-methionine (S)-S-oxide + [thioredoxin]-dithiol. Has an important function as a repair enzyme for proteins that have been inactivated by oxidation. Catalyzes the reversible oxidation-reduction of methionine sulfoxide in proteins to methionine. This Vibrio vulnificus (strain CMCP6) protein is Peptide methionine sulfoxide reductase MsrA.